A 215-amino-acid chain; its full sequence is Pyrrolidone-carboxylate peptidase (215 aa).

Active-site residues include glutamate 80, cysteine 143, and histidine 167.

Belongs to the peptidase C15 family. In terms of assembly, homotetramer.

Its subcellular location is the cytoplasm. The enzyme catalyses Release of an N-terminal pyroglutamyl group from a polypeptide, the second amino acid generally not being Pro.. In terms of biological role, removes 5-oxoproline from various penultimate amino acid residues except L-proline. The polypeptide is Pyrrolidone-carboxylate peptidase (Pectobacterium atrosepticum (strain SCRI 1043 / ATCC BAA-672) (Erwinia carotovora subsp. atroseptica)).